Here is a 219-residue protein sequence, read N- to C-terminus: NADH-quinone oxidoreductase subunit C (219 aa).

Belongs to the complex I 30 kDa subunit family. In terms of assembly, NDH-1 is composed of 14 different subunits. Subunits NuoB, C, D, E, F, and G constitute the peripheral sector of the complex.

It is found in the cell inner membrane. The enzyme catalyses a quinone + NADH + 5 H(+)(in) = a quinol + NAD(+) + 4 H(+)(out). NDH-1 shuttles electrons from NADH, via FMN and iron-sulfur (Fe-S) centers, to quinones in the respiratory chain. The immediate electron acceptor for the enzyme in this species is believed to be ubiquinone. Couples the redox reaction to proton translocation (for every two electrons transferred, four hydrogen ions are translocated across the cytoplasmic membrane), and thus conserves the redox energy in a proton gradient. The sequence is that of NADH-quinone oxidoreductase subunit C from Methylorubrum extorquens (strain PA1) (Methylobacterium extorquens).